A 161-amino-acid chain; its full sequence is Nucleotide-binding protein Bpro_1596 (161 aa).

Belongs to the YajQ family.

In terms of biological role, nucleotide-binding protein. The sequence is that of Nucleotide-binding protein Bpro_1596 from Polaromonas sp. (strain JS666 / ATCC BAA-500).